A 142-amino-acid polypeptide reads, in one-letter code: Small ribosomal subunit protein uS12 (142 aa).

This sequence belongs to the universal ribosomal protein uS12 family. Part of the 30S ribosomal subunit.

Functionally, with S4 and S5 plays an important role in translational accuracy. Located at the interface of the 30S and 50S subunits. The polypeptide is Small ribosomal subunit protein uS12 (Methanosarcina mazei (strain ATCC BAA-159 / DSM 3647 / Goe1 / Go1 / JCM 11833 / OCM 88) (Methanosarcina frisia)).